The chain runs to 208 residues: Pyridoxal 5'-phosphate synthase subunit PdxT (208 aa).

Residue G46–S48 participates in L-glutamine binding. C78 functions as the Nucleophile in the catalytic mechanism. L-glutamine contacts are provided by residues R105 and I156–R157. Active-site charge relay system residues include H192 and E194.

Belongs to the glutaminase PdxT/SNO family. In the presence of PdxS, forms a dodecamer of heterodimers. Only shows activity in the heterodimer.

It catalyses the reaction aldehydo-D-ribose 5-phosphate + D-glyceraldehyde 3-phosphate + L-glutamine = pyridoxal 5'-phosphate + L-glutamate + phosphate + 3 H2O + H(+). The catalysed reaction is L-glutamine + H2O = L-glutamate + NH4(+). Its pathway is cofactor biosynthesis; pyridoxal 5'-phosphate biosynthesis. Its function is as follows. Catalyzes the hydrolysis of glutamine to glutamate and ammonia as part of the biosynthesis of pyridoxal 5'-phosphate. The resulting ammonia molecule is channeled to the active site of PdxS. This chain is Pyridoxal 5'-phosphate synthase subunit PdxT, found in Bifidobacterium adolescentis (strain ATCC 15703 / DSM 20083 / NCTC 11814 / E194a).